The following is a 104-amino-acid chain: Phosphoribosyl-ATP pyrophosphatase (104 aa).

Belongs to the PRA-PH family.

It is found in the cytoplasm. The enzyme catalyses 1-(5-phospho-beta-D-ribosyl)-ATP + H2O = 1-(5-phospho-beta-D-ribosyl)-5'-AMP + diphosphate + H(+). The protein operates within amino-acid biosynthesis; L-histidine biosynthesis; L-histidine from 5-phospho-alpha-D-ribose 1-diphosphate: step 2/9. The protein is Phosphoribosyl-ATP pyrophosphatase of Streptococcus gordonii (strain Challis / ATCC 35105 / BCRC 15272 / CH1 / DL1 / V288).